The primary structure comprises 450 residues: Methionine aminopeptidase 2-2 (450 aa).

Basic and acidic residues-rich tracts occupy residues 1–10 and 30–39; these read MGAKISEDHP and RGAHLSRDGD. Residues 1 to 100 are disordered; the sequence is MGAKISEDHP…PPRVPLSELF (100 aa). The segment covering 47–56 has biased composition (acidic residues); it reads GDDDDDDDEG. A compositionally biased stretch (basic residues) spans 69-86; sequence KKKKKKRKPKKKKAKKAT. H211 contributes to the substrate binding site. The a divalent metal cation site is built by D232, D243, and H302. H310 serves as a coordination point for substrate. The a divalent metal cation site is built by E335 and E431.

This sequence belongs to the peptidase M24A family. Methionine aminopeptidase eukaryotic type 2 subfamily. The cofactor is Co(2+). Zn(2+) serves as cofactor. Mn(2+) is required as a cofactor. Requires Fe(2+) as cofactor.

Its subcellular location is the cytoplasm. It catalyses the reaction Release of N-terminal amino acids, preferentially methionine, from peptides and arylamides.. Functionally, cotranslationally removes the N-terminal methionine from nascent proteins. The N-terminal methionine is often cleaved when the second residue in the primary sequence is small and uncharged (Met-Ala-, Cys, Gly, Pro, Ser, Thr, or Val). The sequence is that of Methionine aminopeptidase 2-2 from Fusarium vanettenii (strain ATCC MYA-4622 / CBS 123669 / FGSC 9596 / NRRL 45880 / 77-13-4) (Fusarium solani subsp. pisi).